The sequence spans 94 residues: Protein translocase subunit SecE (94 aa).

The segment at 1-32 is disordered; it reads MTDAVGSIDMPDAQDEAPDSKKSRKGGKRGKK. Residues 22–32 show a composition bias toward basic residues; the sequence is KSRKGGKRGKK. The helical transmembrane segment at 65-85 threads the bilayer; that stretch reads TVVIIFVVIMIGLVTLIDYGF.

Belongs to the SecE/SEC61-gamma family. As to quaternary structure, component of the Sec protein translocase complex. Heterotrimer consisting of SecY, SecE and SecG subunits. The heterotrimers can form oligomers, although 1 heterotrimer is thought to be able to translocate proteins. Interacts with the ribosome. Interacts with SecDF, and other proteins may be involved. Interacts with SecA.

Its subcellular location is the cell membrane. Essential subunit of the Sec protein translocation channel SecYEG. Clamps together the 2 halves of SecY. May contact the channel plug during translocation. This chain is Protein translocase subunit SecE, found in Streptomyces lividans.